Here is a 1380-residue protein sequence, read N- to C-terminus: Inverted formin-2 (1380 aa).

The GBD/FH3 domain occupies Met-1–Gln-330. 2 disordered regions span residues Leu-341–Pro-391 and Ile-440–Leu-541. Over residues Thr-343–Lys-352 the composition is skewed to basic residues. Residues Gln-367–Pro-385 show a composition bias toward basic and acidic residues. The 161-residue stretch at Val-432 to Ala-592 folds into the FH1 domain. Composition is skewed to pro residues over residues Leu-446–Pro-470 and Thr-478–Leu-541. The FH2 domain maps to Tyr-593–Asp-981. 2 coiled-coil regions span residues Leu-879 to Asp-930 and Leu-956 to Asn-991. Positions Asp-1009 to Thr-1024 constitute a WH2 domain. 3 disordered regions span residues Lys-1026–Asp-1049, His-1188–Ala-1244, and Phe-1260–Gln-1380. Polar residues-rich tracts occupy residues Gly-1206–Ala-1244, Phe-1260–Arg-1284, and Thr-1294–Ser-1303. The segment covering Glu-1306 to Gly-1322 has biased composition (basic and acidic residues). A compositionally biased stretch (low complexity) spans Ser-1328–Ser-1339. The segment covering Val-1345 to Ser-1359 has biased composition (basic residues).

This sequence belongs to the formin homology family.

The chain is Inverted formin-2 (inf2) from Xenopus tropicalis (Western clawed frog).